We begin with the raw amino-acid sequence, 694 residues long: Methionine--tRNA ligase (694 aa).

The 'HIGH' region motif lies at 12–22; sequence PYANGPLHLGH. 4 residues coordinate Zn(2+): cysteine 143, cysteine 146, cysteine 156, and cysteine 159. A 'KMSKS' region motif is present at residues 330-334; it reads KMSKS. Lysine 333 is a binding site for ATP. Over residues 550 to 575 the composition is skewed to low complexity; the sequence is LAAPAAPATTSKAAPAKPDTKPAAAA. Residues 550-580 form a disordered region; sequence LAAPAAPATTSKAAPAKPDTKPAAAANPQSP. The tRNA-binding domain maps to 591 to 694; that stretch reads DFAKLDLRIG…SGAQPGMPVR (104 aa).

It belongs to the class-I aminoacyl-tRNA synthetase family. MetG type 1 subfamily. Homodimer. Requires Zn(2+) as cofactor.

It localises to the cytoplasm. It catalyses the reaction tRNA(Met) + L-methionine + ATP = L-methionyl-tRNA(Met) + AMP + diphosphate. Functionally, is required not only for elongation of protein synthesis but also for the initiation of all mRNA translation through initiator tRNA(fMet) aminoacylation. The sequence is that of Methionine--tRNA ligase from Xanthomonas oryzae pv. oryzae (strain MAFF 311018).